We begin with the raw amino-acid sequence, 201 residues long: Transgelin (201 aa).

N-acetylalanine is present on Ala2. Residues 24–137 (EELEERLVEW…RTVMALGSLA (114 aa)) enclose the Calponin-homology (CH) domain. Positions 154–161 (KKAQEHKR) are could be involved in actin-binding. Phosphoserine is present on Ser166. Lys172 is subject to N6-acetyllysine. A Calponin-like repeat occupies 175-200 (IGLQMGSNRGASQAGMTGYGRPRQII). Phosphoserine is present on Ser181. An Omega-N-methylarginine modification is found at Arg183.

It belongs to the calponin family. Smooth muscle and mesenchymal cells but not in skeletal muscle or lymphocytes.

Its subcellular location is the cytoplasm. Functionally, actin cross-linking/gelling protein. In Rattus norvegicus (Rat), this protein is Transgelin (Tagln).